Consider the following 337-residue polypeptide: Probable RuBisCO transcriptional regulator (337 aa).

Residues 6–63 form the HTH lysR-type domain; the sequence is FTLDQLRILKAIAVEGSFKRAADSLYVSQPAVSLQVQNLERQLDVPLFDRGGRRAQLT. Residues 23 to 42 constitute a DNA-binding region (H-T-H motif); that stretch reads FKRAADSLYVSQPAVSLQVQ.

This sequence belongs to the LysR transcriptional regulatory family.

Functionally, trans-acting transcriptional regulator of RuBisCO genes (rbcL and rbcS) expression. The polypeptide is Probable RuBisCO transcriptional regulator (rbcR) (Nostoc sp. (strain PCC 7120 / SAG 25.82 / UTEX 2576)).